The primary structure comprises 514 residues: F-box-like/WD repeat-containing protein TBL1XR1 (514 aa).

The residue at position 2 (serine 2) is an N-acetylserine. In terms of domain architecture, LisH spans 4 to 36; that stretch reads SSDEVNFLVYRYLQESGFSHSAFTFGIESHISQ. Residues 41-86 form the F-box-like domain; it reads GALVPPAALISIIQKGLQYVEAEVSINEDGTLFDGRPIESLSLIDA. At lysine 102 the chain carries N6-acetyllysine. The disordered stretch occupies residues 114 to 139; it reads AAAATNQQGSAKNGENTANGEENGAH. Residues 124-135 show a composition bias toward low complexity; that stretch reads AKNGENTANGEE. WD repeat units follow at residues 167–206, 223–262, 264–303, 306–344, 347–386, 389–437, 440–479, and 481–513; these read GHES…TSGP, PSNK…ASTL, QHKG…AKQQ, FHSA…PIKT, GHTN…CVHD, AHNK…CIHT, KHQE…LVHS, and RGTG…LDLR. A Glycyl lysine isopeptide (Lys-Gly) (interchain with G-Cter in SUMO2) cross-link involves residue lysine 277.

This sequence belongs to the WD repeat EBI family. In terms of assembly, component of the N-Cor repressor complex, at least composed of NCOR1, NCOR2, HDAC3, TBL1X, TBL1XR1, CORO2A and GPS2. Probable component of some E3 ubiquitin ligase complex. Interacts with histones H2B and H4. Interacts with MECP2; bridges interaction between MECP2 and NCOR1. Interacts with USP44.

It localises to the nucleus. F-box-like protein involved in the recruitment of the ubiquitin/19S proteasome complex to nuclear receptor-regulated transcription units. Plays an essential role in transcription activation mediated by nuclear receptors. Probably acts as integral component of the N-Cor corepressor complex that mediates the recruitment of the 19S proteasome complex, leading to the subsequent proteasomal degradation of N-Cor complex, thereby allowing cofactor exchange, and transcription activation. The sequence is that of F-box-like/WD repeat-containing protein TBL1XR1 (Tbl1xr1) from Mus musculus (Mouse).